A 575-amino-acid polypeptide reads, in one-letter code: Proline--tRNA ligase (575 aa).

The protein belongs to the class-II aminoacyl-tRNA synthetase family. ProS type 1 subfamily. Homodimer.

It localises to the cytoplasm. It carries out the reaction tRNA(Pro) + L-proline + ATP = L-prolyl-tRNA(Pro) + AMP + diphosphate. Catalyzes the attachment of proline to tRNA(Pro) in a two-step reaction: proline is first activated by ATP to form Pro-AMP and then transferred to the acceptor end of tRNA(Pro). As ProRS can inadvertently accommodate and process non-cognate amino acids such as alanine and cysteine, to avoid such errors it has two additional distinct editing activities against alanine. One activity is designated as 'pretransfer' editing and involves the tRNA(Pro)-independent hydrolysis of activated Ala-AMP. The other activity is designated 'posttransfer' editing and involves deacylation of mischarged Ala-tRNA(Pro). The misacylated Cys-tRNA(Pro) is not edited by ProRS. The polypeptide is Proline--tRNA ligase (Heliobacterium modesticaldum (strain ATCC 51547 / Ice1)).